The primary structure comprises 799 residues: Dipeptidyl peptidase family member 1 (799 aa).

Residues 1-31 (MTAEADLLEGYDEELGGNESQKRDCKGITTA) are Cytoplasmic-facing. A helical; Signal-anchor for type II membrane protein membrane pass occupies residues 32–52 (IVVVLLILVMIFAALVFFTPL). Topologically, residues 53–799 (FAAKSFGSWR…FLRQCFYTDK (747 aa)) are lumenal. Asparagine 64, asparagine 138, asparagine 267, and asparagine 335 each carry an N-linked (GlcNAc...) asparagine glycan. Residues cysteine 474 and cysteine 477 are joined by a disulfide bond. Asparagine 481 carries N-linked (GlcNAc...) asparagine glycosylation. A disulfide bond links cysteine 482 and cysteine 500. A glycan (N-linked (GlcNAc...) asparagine) is linked at asparagine 512. Active-site charge relay system residues include serine 669, aspartate 742, and histidine 774. Cysteine 689 and cysteine 794 form a disulfide bridge.

The protein belongs to the peptidase S9B family. DPPIV subfamily.

It is found in the cell membrane. Functionally, removes N-terminal dipeptides sequentially from polypeptides. Essential for control of distal tip cell migration. This Caenorhabditis elegans protein is Dipeptidyl peptidase family member 1 (dpf-1).